Consider the following 151-residue polypeptide: Small ribosomal subunit protein eS6 (151 aa).

It belongs to the eukaryotic ribosomal protein eS6 family.

The sequence is that of Small ribosomal subunit protein eS6 from Pyrobaculum calidifontis (strain DSM 21063 / JCM 11548 / VA1).